The sequence spans 327 residues: COP9 signalosome complex subunit 7 (327 aa).

Positions 4–165 constitute a PCI domain; that stretch reads VHHRALDALQ…NPPTVNVTSV (162 aa). 2 disordered regions span residues 233-260 and 276-327; these read GGEQ…AGWK and GGSN…GKKS. Residues 236–255 are compositionally biased toward gly residues; that stretch reads QLQGGNPGQGQGQGQGGLGK. Over residues 315–327 the composition is skewed to basic residues; that stretch reads GARHSKRFLGKKS.

The protein belongs to the CSN7/EIF3M family. CSN7 subfamily. As to quaternary structure, component of the COP9 signalosome (CSN) complex. Present in uninduced vegetative hyphae, induced conidiating cultures and in both conidiospores and ascospores.

The protein localises to the cytoplasm. It is found in the nucleus. Its function is as follows. Component of the COP9 signalosome (CSN) complex that acts as an regulator of the ubiquitin (Ubl) conjugation pathway by mediating the deneddylation of the cullin subunit of SCF-type E3 ubiquitin-protein ligase complexes. The CSN complex seems to link protein degradation to sexual development. May be required for sporulation only at elevated temperatures. The polypeptide is COP9 signalosome complex subunit 7 (csnG) (Emericella nidulans (strain FGSC A4 / ATCC 38163 / CBS 112.46 / NRRL 194 / M139) (Aspergillus nidulans)).